A 310-amino-acid chain; its full sequence is Retrotransposon Gag-like protein 4 (310 aa).

The CCHC-type zinc finger occupies Gln278 to Ala295.

Its function is as follows. Involved in cognitive function in the brain, possibly via the noradrenergic system. This chain is Retrotransposon Gag-like protein 4, found in Homo sapiens (Human).